The chain runs to 138 residues: Cysteine desulfuration protein SufE (138 aa).

The active-site Cysteine persulfide intermediate is the Cys-51.

Belongs to the SufE family. Homodimer. Interacts with SufS.

The protein localises to the cytoplasm. It participates in cofactor biosynthesis; iron-sulfur cluster biosynthesis. In terms of biological role, participates in cysteine desulfuration mediated by SufS. Cysteine desulfuration mobilizes sulfur from L-cysteine to yield L-alanine and constitutes an essential step in sulfur metabolism for biosynthesis of a variety of sulfur-containing biomolecules. Functions as a sulfur acceptor for SufS, by mediating the direct transfer of the sulfur atom from the S-sulfanylcysteine of SufS, an intermediate product of cysteine desulfuration process. The polypeptide is Cysteine desulfuration protein SufE (Photorhabdus laumondii subsp. laumondii (strain DSM 15139 / CIP 105565 / TT01) (Photorhabdus luminescens subsp. laumondii)).